Reading from the N-terminus, the 152-residue chain is D-aminoacyl-tRNA deacylase (152 aa).

Positions 142–143 (GP) match the Gly-cisPro motif, important for rejection of L-amino acids motif.

This sequence belongs to the DTD family. As to quaternary structure, homodimer.

It is found in the cytoplasm. The catalysed reaction is glycyl-tRNA(Ala) + H2O = tRNA(Ala) + glycine + H(+). It carries out the reaction a D-aminoacyl-tRNA + H2O = a tRNA + a D-alpha-amino acid + H(+). An aminoacyl-tRNA editing enzyme that deacylates mischarged D-aminoacyl-tRNAs. Also deacylates mischarged glycyl-tRNA(Ala), protecting cells against glycine mischarging by AlaRS. Acts via tRNA-based rather than protein-based catalysis; rejects L-amino acids rather than detecting D-amino acids in the active site. By recycling D-aminoacyl-tRNA to D-amino acids and free tRNA molecules, this enzyme counteracts the toxicity associated with the formation of D-aminoacyl-tRNA entities in vivo and helps enforce protein L-homochirality. The protein is D-aminoacyl-tRNA deacylase of Burkholderia mallei (strain NCTC 10247).